Here is a 69-residue protein sequence, read N- to C-terminus: Cold shock-like protein CspC (69 aa).

In terms of domain architecture, CSD spans 6 to 66 (GQVKWFNESK…GQKGPAAVNV (61 aa)).

Its subcellular location is the cytoplasm. This chain is Cold shock-like protein CspC (cspC), found in Shigella flexneri.